We begin with the raw amino-acid sequence, 344 residues long: Protein YRO2 (344 aa).

The Extracellular portion of the chain corresponds to 1-34 (MSDYVELLKRGGNEAIKINPPTGADFHITSRGSD). A helical membrane pass occupies residues 35 to 55 (WLFTVFCVNLLFGVILVPLMF). Topologically, residues 56–62 (RKPVKDR) are cytoplasmic. Residues 63 to 83 (FVYYTAIAPNLFMSIAYFTMA) traverse the membrane as a helical segment. Over 84-119 (SNLGWIPVRAKYNHVQTSTQKEHPGYRQIFYARYVG) the chain is Extracellular. A helical membrane pass occupies residues 120-140 (WFLAFPWPIIQMSLLGGTPLW). Gln-141 is a topological domain (cytoplasmic). Residues 142-162 (IAFNVGMTEIFTVCWLIAACV) traverse the membrane as a helical segment. Topologically, residues 163-172 (HSTYKWGYYT) are extracellular. Residues 173–193 (IGIGAAIVVCISLMTTTFNLV) form a helical membrane-spanning segment. Residues 194-202 (KARGKDVSN) are Cytoplasmic-facing. A helical transmembrane segment spans residues 203–223 (VFITFMSVIMFLWLIAYPTCF). Residues 224-238 (GITDGGNVLQPDSAT) lie on the Extracellular side of the membrane. The helical transmembrane segment at 239–259 (IFYGIIDLLILSILPVLFMPL) threads the bilayer. At 260 to 344 (ANYLGIERLG…EEEDVATDSE (85 aa)) the chain is on the cytoplasmic side. The tract at residues 282–344 (PVAEKKMPSP…EEEDVATDSE (63 aa)) is disordered. Lys-286 is covalently cross-linked (Glycyl lysine isopeptide (Lys-Gly) (interchain with G-Cter in ubiquitin)). A Phosphoserine modification is found at Ser-293. The segment covering 297-306 (SDSDSSIKEK) has biased composition (basic and acidic residues). Residues 307–330 (LKLKKKHKKDKKKAKKAKKAKKAK) show a composition bias toward basic residues. Over residues 334–344 (EEEEDVATDSE) the composition is skewed to acidic residues. Thr-341 carries the post-translational modification Phosphothreonine. Ser-343 is modified (phosphoserine).

This sequence belongs to the archaeal/bacterial/fungal opsin family.

It is found in the membrane. The chain is Protein YRO2 (YRO2) from Saccharomyces cerevisiae (strain ATCC 204508 / S288c) (Baker's yeast).